The primary structure comprises 95 residues: Co-chaperonin GroES (95 aa).

Belongs to the GroES chaperonin family. Heptamer of 7 subunits arranged in a ring. Interacts with the chaperonin GroEL.

The protein resides in the cytoplasm. Together with the chaperonin GroEL, plays an essential role in assisting protein folding. The GroEL-GroES system forms a nano-cage that allows encapsulation of the non-native substrate proteins and provides a physical environment optimized to promote and accelerate protein folding. GroES binds to the apical surface of the GroEL ring, thereby capping the opening of the GroEL channel. This Rickettsia conorii (strain ATCC VR-613 / Malish 7) protein is Co-chaperonin GroES.